We begin with the raw amino-acid sequence, 204 residues long: Urease accessory protein UreG 1 (204 aa).

14 to 21 contacts GTP; that stretch reads GPVGSGKT.

This sequence belongs to the SIMIBI class G3E GTPase family. UreG subfamily. In terms of assembly, homodimer. UreD, UreF and UreG form a complex that acts as a GTP-hydrolysis-dependent molecular chaperone, activating the urease apoprotein by helping to assemble the nickel containing metallocenter of UreC. The UreE protein probably delivers the nickel.

Its subcellular location is the cytoplasm. Functionally, facilitates the functional incorporation of the urease nickel metallocenter. This process requires GTP hydrolysis, probably effectuated by UreG. The sequence is that of Urease accessory protein UreG 1 from Methylorubrum extorquens (strain PA1) (Methylobacterium extorquens).